The sequence spans 120 residues: Large ribosomal subunit protein uL18 (120 aa).

It belongs to the universal ribosomal protein uL18 family. In terms of assembly, part of the 50S ribosomal subunit; part of the 5S rRNA/L5/L18/L25 subcomplex. Contacts the 5S and 23S rRNAs.

Its function is as follows. This is one of the proteins that bind and probably mediate the attachment of the 5S RNA into the large ribosomal subunit, where it forms part of the central protuberance. This is Large ribosomal subunit protein uL18 from Bacillus cytotoxicus (strain DSM 22905 / CIP 110041 / 391-98 / NVH 391-98).